We begin with the raw amino-acid sequence, 126 residues long: Nascent polypeptide-associated complex protein (126 aa).

An NAC-A/B domain is found at 10–77 (PRMMKQMQKM…AKKVAKAEEK (68 aa)).

The protein belongs to the NAC-alpha family. As to quaternary structure, homodimer. Interacts with the ribosome. Binds ribosomal RNA.

Contacts the emerging nascent chain on the ribosome. The polypeptide is Nascent polypeptide-associated complex protein (Methanococcus maripaludis (strain C5 / ATCC BAA-1333)).